A 585-amino-acid chain; its full sequence is Pre-hexon-linking protein IIIa (585 aa).

The tract at residues 1-24 (MMQDATDPAVRAALQSQPSGLNST) is disordered. A peripentonal hexon-tethering domain region spans residues 1–106 (MMQDATDPAV…ALLQRVARYN (106 aa)). Over residues 14 to 24 (LQSQPSGLNST) the composition is skewed to polar residues. The segment at 138-251 (GSMVALNAFL…FTDSGSVSRD (114 aa)) is binding to hexon-linking protein. At Ser-225 the chain carries Phosphoserine; by host. Thr-274 carries the post-translational modification Phosphothreonine; by host. Phosphoserine; by host occurs at positions 310, 444, 449, 450, 452, 469, and 473. The interval 438–475 (AALRKESFRRPSSLSDLGAAAPRSDASSPFPSLIGSFT) is disordered. Residues 462–475 (DASSPFPSLIGSFT) are compositionally biased toward polar residues. At Tyr-490 the chain carries Phosphotyrosine; by host. Phosphoserine; by host occurs at positions 494 and 515. Positions 528–573 (QEHRDVPGPRPPTRRQRHDRQRGLVWEDDDSADDSSVLDLGGSGNP) are disordered. The propeptide occupies 571–585 (GNPFAHLRPRLGRMF).

Belongs to the adenoviridae hexon-linking protein IIIa family. In terms of assembly, interacts with hexon proteins; this interaction tethers the peripentonal hexons to hexons situated in the facet. Interacts with the penton protein (via N-terminus). Interacts with packaging protein 3; this interaction is required to promote correct genome packaging. Cleaved near the C-terminus by the viral protease during virion maturation to form the mature protein.

It localises to the virion. It is found in the host nucleus. In terms of biological role, structural component of the virion that acts as a cement protein on the capsid exterior which mediates the interactions between the hexons, including the peripentonal hexons, and reaches all the way to the penton vertices. Two hexon linking proteins IIIa, one from each facet, stabilize the unique edge interface between a pair of facets. As the virus enters the host cell, hexon linking proteins IIIa are shed concomitant with virion acidification in the endosome. During virus assembly, seems to play a role in the serotype specificity of the packaging of viral DNA via its interaction with packaging protein 3. In Human adenovirus C serotype 2 (HAdV-2), this protein is Pre-hexon-linking protein IIIa.